We begin with the raw amino-acid sequence, 210 residues long: Probable HTH-type transcriptional regulator ArpR (210 aa).

In terms of domain architecture, HTH tetR-type spans 10 to 70; that stretch reads QETRAQIIEA…ALLDSLHETH (61 aa). Residues 33–52 constitute a DNA-binding region (H-T-H motif); that stretch reads TLADIAELAGVTRGAIYWHF.

Probable regulatory protein for the antibiotic efflux pump arpABC operon. May function as a repressor. This Pseudomonas putida (Arthrobacter siderocapsulatus) protein is Probable HTH-type transcriptional regulator ArpR (arpR).